We begin with the raw amino-acid sequence, 341 residues long: Ribulose-5-phosphate reductase 2 (341 aa).

Zn(2+) is bound by residues Cys-38, His-64, Glu-65, and Glu-144.

The protein belongs to the zinc-containing alcohol dehydrogenase family. As to quaternary structure, heterodimer together with TarI. It depends on Zn(2+) as a cofactor.

The enzyme catalyses D-ribitol 5-phosphate + NADP(+) = D-ribulose 5-phosphate + NADPH + H(+). Its pathway is cell wall biogenesis; poly(ribitol phosphate) teichoic acid biosynthesis. Functionally, catalyzes the NADPH dependent reduction of D-ribulose 5-phosphate to D-ribitol 5-phosphate. This is Ribulose-5-phosphate reductase 2 from Staphylococcus aureus (strain NCTC 8325 / PS 47).